Reading from the N-terminus, the 401-residue chain is Collagen and calcium-binding EGF domain-containing protein 1 (401 aa).

Residues 1–22 form the signal peptide; it reads MIYPGRGASLSVAVALVLFSSG. Residues 126–167 form the EGF-like; calcium-binding domain; that stretch reads DIDECANNNETVCSQMCVNTPGSYRCDCHSGFYLEDDGKTCT. 3 cysteine pairs are disulfide-bonded: Cys130/Cys142, Cys138/Cys151, and Cys153/Cys166. A glycan (N-linked (GlcNAc...) asparagine) is linked at Asn134. 2 disordered regions span residues 229–321 and 344–401; these read TTNS…PGSF and SRPL…DWPV. Collagen-like domains lie at 234-276 and 286-319; these read LPGP…PIGP and GRRGPVGPPGAPGRDGMKGERGFPGPSGPPGPPG. The segment covering 235 to 244 has biased composition (pro residues); that stretch reads PGPPGPPGPA. The span at 246 to 258 shows a compositional bias: low complexity; that stretch reads TPGAKGSSGSPGQ.

Belongs to the CCBE1 family. In terms of tissue distribution, not expressed in blood or lymphatic endothelial cells, correlating spatially and temporally with the migration routes of endothelial cells that bud from the PCV, migrate in association with somite boundaries and seed the horizontal myoseptum region from where lymphatic precursors later migrate.

The protein localises to the secreted. Functionally, required for lymphangioblast budding and angiogenic sprouting from venous endothelium during embryogenesis. Required for the formation of facial lymphatic structures. Necessary for lymphangiogenesis, but is probably not part of either the vegfc-vegfr3 signaling or sox18-prox1 transcriptional pathways. The chain is Collagen and calcium-binding EGF domain-containing protein 1 (ccbe1) from Danio rerio (Zebrafish).